The following is a 453-amino-acid chain: MQTRQLLALALAVAATEAAHQGFNYGNTKSDGSAKSQSDFAAEFSTAKNLVGTSGFTSARLYTMIQGGTSATPISAIPAAIAEDTSLLLGIWASGGNVANEIAALKAAIAQYGADFGKHVVGISVGSEDLYRNSVDGVKSKAGLGANPDDLVSYIHQVREAIAGTSLSGAPIGHVDTWTAWVNGSNSAVIDACDWLGFDGYPYFQNTMPNSISDAKALFDESVAKTQAVAKGKEVWITETGWPVSGKTENLAVANTANAKAYWDQVGCPLFGNTNTWWYILQDADPVTPNPSFGIVGSTLSTTPLFDLSCSAVSSSSAVPSATAAATAASGAGASGSQTSGFATAAAGSSSAAKPTFSVGKGPNGSYNGTYPGSWNSTRPGANGGSSGSSGSSGSSGSSGSSGSSGSGASGHSSSTGSSSFPSSTNLLSNSASGLSGSLFGAVAAVFVALAAL.

Positions methionine 1–alanine 18 are cleaved as a signal peptide. Glutamate 128 acts as the Proton donor in catalysis. N-linked (GlcNAc...) asparagine glycosylation is present at asparagine 183. The active-site Nucleophile is glutamate 239. N-linked (GlcNAc...) asparagine glycosylation is found at asparagine 364, asparagine 368, and asparagine 376. Polar residues predominate over residues threonine 370–proline 380. A disordered region spans residues threonine 370–serine 423. 2 stretches are compositionally biased toward low complexity: residues serine 389 to serine 402 and serine 410 to serine 423. Asparagine 430 carries the GPI-anchor amidated asparagine lipid modification. A propeptide spans serine 431 to leucine 453 (removed in mature form).

Belongs to the glycosyl hydrolase 17 family. In terms of processing, the GPI-anchor is attached to the protein in the endoplasmic reticulum and serves to target the protein to the cell surface. There, the glucosamine-inositol phospholipid moiety is cleaved off and the GPI-modified mannoprotein is covalently attached via its lipidless GPI glycan remnant to the 1,6-beta-glucan of the outer cell wall layer.

It is found in the cell membrane. It localises to the secreted. The protein resides in the cell wall. It carries out the reaction Hydrolysis of (1-&gt;3)-beta-D-glucosidic linkages in (1-&gt;3)-beta-D-glucans.. In terms of biological role, glucanases play a role in cell expansion during growth, in cell-cell fusion during mating, and in spore release during sporulation. This enzyme may be involved in beta-glucan degradation and also function biosynthetically as a transglycosylase. The chain is Probable glucan endo-1,3-beta-glucosidase eglC (eglC) from Aspergillus clavatus (strain ATCC 1007 / CBS 513.65 / DSM 816 / NCTC 3887 / NRRL 1 / QM 1276 / 107).